The following is a 127-amino-acid chain: Small ribosomal subunit protein uS11 (127 aa).

This sequence belongs to the universal ribosomal protein uS11 family. In terms of assembly, part of the 30S ribosomal subunit. Interacts with proteins S7 and S18. Binds to IF-3.

Functionally, located on the platform of the 30S subunit, it bridges several disparate RNA helices of the 16S rRNA. Forms part of the Shine-Dalgarno cleft in the 70S ribosome. This is Small ribosomal subunit protein uS11 from Chlorobaculum parvum (strain DSM 263 / NCIMB 8327) (Chlorobium vibrioforme subsp. thiosulfatophilum).